We begin with the raw amino-acid sequence, 861 residues long: Leucine--tRNA ligase (861 aa).

Positions 42 to 52 match the 'HIGH' region motif; that stretch reads PYPSGNLHMGH. A 'KMSKS' region motif is present at residues 620–624; sequence KMSKS. Lysine 623 contributes to the ATP binding site.

Belongs to the class-I aminoacyl-tRNA synthetase family.

It localises to the cytoplasm. It carries out the reaction tRNA(Leu) + L-leucine + ATP = L-leucyl-tRNA(Leu) + AMP + diphosphate. This chain is Leucine--tRNA ligase, found in Baumannia cicadellinicola subsp. Homalodisca coagulata.